Consider the following 674-residue polypeptide: Probable protein phosphatase 2C 66 (674 aa).

A Phosphoserine modification is found at Ser-125. Disordered stretches follow at residues 153–175 (YSGPIESTKKTEKEKPKKIRKKP) and 202–247 (KSVI…KQSM). A PPM-type phosphatase domain is found at 244-665 (KQSMNSVLDV…DDVSVIVISL (422 aa)). Positions 282 and 283 each coordinate Mn(2+). Over residues 373–384 (NNKTKSDNRCDQ) the composition is skewed to basic and acidic residues. The disordered stretch occupies residues 373–392 (NNKTKSDNRCDQKGSNSTTT). Mn(2+)-binding residues include Asp-593 and Asp-656.

This sequence belongs to the PP2C family. Mg(2+) is required as a cofactor. The cofactor is Mn(2+). As to expression, expressed at low level in seedlings, roots, leaves, stems, young inflorescences, flowers and siliques.

It localises to the nucleus. The enzyme catalyses O-phospho-L-seryl-[protein] + H2O = L-seryl-[protein] + phosphate. The catalysed reaction is O-phospho-L-threonyl-[protein] + H2O = L-threonyl-[protein] + phosphate. This chain is Probable protein phosphatase 2C 66 (PLL2), found in Arabidopsis thaliana (Mouse-ear cress).